The primary structure comprises 357 residues: MKFSSVLALAASAKLVASHATVFAVWINDEDQGLGNTADGYIRTPPNNSPVTDVTSTDLTCNVNGDQAAAKTLEVAAGDKITFEWHHNSRDSSDDIIADSHKGPVLVYMAPTEAGSAGKNWVKIYEDGYNDGTWAVDTLIANKGKHSVTVPDVPAGNYLFRPEIIALHEGNREGGAQLYMECVQFKVTSDGTTQLPEGVSLPGAYTATDEGILFDIYSSFDSYPIPGPAVWDGASSGSGSSGSGSSSSAAATSSAEKTATSTTAAATTTAVATSTSSATQVQPTSVATFTTSVRPTTSAAPTTSAPTSSAAPTGGTGTGSIQIYQQCGGMNYKGATGCASGLTCKQWNPYYHQCVQA.

An N-terminal signal peptide occupies residues 1–18; the sequence is MKFSSVLALAASAKLVAS. The Cu(2+) site is built by histidine 19 and histidine 101. Positions 19-234 are catalytic; sequence HATVFAVWIN…IPGPAVWDGA (216 aa). Cysteine 61 and cysteine 182 are disulfide-bonded. Positions 168 and 177 each coordinate O2. Tyrosine 179 contacts Cu(2+). The segment at 235-318 is ser/Thr-rich linker; sequence SSGSGSSGSG…SAAPTGGTGT (84 aa). A disordered region spans residues 292–317; sequence SVRPTTSAAPTTSAPTSSAAPTGGTG. Low complexity predominate over residues 295–313; it reads PTTSAAPTTSAPTSSAAPT. The 37-residue stretch at 319-355 folds into the CBM1 domain; that stretch reads GSIQIYQQCGGMNYKGATGCASGLTCKQWNPYYHQCV.

Belongs to the polysaccharide monooxygenase AA9 family. It depends on Cu(2+) as a cofactor.

It is found in the secreted. The catalysed reaction is [(1-&gt;4)-beta-D-glucosyl]n+m + reduced acceptor + O2 = 4-dehydro-beta-D-glucosyl-[(1-&gt;4)-beta-D-glucosyl]n-1 + [(1-&gt;4)-beta-D-glucosyl]m + acceptor + H2O.. Its function is as follows. Lytic polysaccharide monooxygenase (LPMO) that depolymerizes crystalline and amorphous polysaccharides via the oxidation of scissile alpha- or beta-(1-4)-glycosidic bonds, yielding C4 oxidation products. Catalysis by LPMOs requires the reduction of the active-site copper from Cu(II) to Cu(I) by a reducing agent and H(2)O(2) or O(2) as a cosubstrate. Active on carboxymethylcellulose (CMC), hydroxyethylcellulose (HEC) and beta-glucan. Also active on soluble cellohexaose, a property that is restricted to only a few characterized LPMOs. This Emericella nidulans (strain FGSC A4 / ATCC 38163 / CBS 112.46 / NRRL 194 / M139) (Aspergillus nidulans) protein is AA9 family lytic polysaccharide monooxygenase B.